The sequence spans 260 residues: UPF0246 protein BTH_I1090 (260 aa).

The protein belongs to the UPF0246 family.

The protein is UPF0246 protein BTH_I1090 of Burkholderia thailandensis (strain ATCC 700388 / DSM 13276 / CCUG 48851 / CIP 106301 / E264).